We begin with the raw amino-acid sequence, 220 residues long: Sec-independent protein translocase protein TatB (220 aa).

A helical membrane pass occupies residues 1–21; that stretch reads MFDIGFSELLLVLVIGLVVLG. The segment at 192–220 is disordered; the sequence is KQQIDTIDSHGTDLSSAGPSRIHQPGGDQ.

It belongs to the TatB family. In terms of assembly, the Tat system comprises two distinct complexes: a TatABC complex, containing multiple copies of TatA, TatB and TatC subunits, and a separate TatA complex, containing only TatA subunits. Substrates initially bind to the TatABC complex, which probably triggers association of the separate TatA complex to form the active translocon.

It localises to the cell inner membrane. Its function is as follows. Part of the twin-arginine translocation (Tat) system that transports large folded proteins containing a characteristic twin-arginine motif in their signal peptide across membranes. Together with TatC, TatB is part of a receptor directly interacting with Tat signal peptides. TatB may form an oligomeric binding site that transiently accommodates folded Tat precursor proteins before their translocation. This Yersinia pestis bv. Antiqua (strain Antiqua) protein is Sec-independent protein translocase protein TatB.